Consider the following 160-residue polypeptide: Small ribosomal subunit protein uS10m (160 aa).

The protein belongs to the universal ribosomal protein uS10 family. As to quaternary structure, component of the mitochondrial ribosome small subunit (28S) which comprises a 12S rRNA and about 30 distinct proteins.

The protein localises to the mitochondrion. The protein is Small ribosomal subunit protein uS10m (Mrps10) of Mus musculus (Mouse).